The following is a 273-amino-acid chain: Undecaprenyl-diphosphatase (273 aa).

6 helical membrane passes run 46-63, 83-103, 109-129, 184-204, 218-238, and 249-269; these read LFEVVIQSGAILAVCWEY, FVLNLIIAFLPAGIVGFLAGK, LFNSTTVTTTFILGGLIILWV, ATEFSFFLAIPTLFIATAYDL, AFGIGFAAAFVSAFLAVRGLL, and FAWYRIAFGLVVLSTAHYGLV.

It belongs to the UppP family.

It is found in the cell inner membrane. The enzyme catalyses di-trans,octa-cis-undecaprenyl diphosphate + H2O = di-trans,octa-cis-undecaprenyl phosphate + phosphate + H(+). Catalyzes the dephosphorylation of undecaprenyl diphosphate (UPP). Confers resistance to bacitracin. This chain is Undecaprenyl-diphosphatase, found in Methylococcus capsulatus (strain ATCC 33009 / NCIMB 11132 / Bath).